The sequence spans 108 residues: UPF0060 membrane protein Mflv_3127 (108 aa).

Transmembrane regions (helical) follow at residues 7–27, 32–52, 61–81, and 87–107; these read LLFVLAAVLEIGGAWLVWQGF, GWLWVGAGVLALGAYGFVAAF, VLAAYGGVFVAGSLIWGMVAD, and RWDITGAAVCLLGVVLIMYAP.

It belongs to the UPF0060 family.

The protein localises to the cell membrane. In Mycolicibacterium gilvum (strain PYR-GCK) (Mycobacterium gilvum (strain PYR-GCK)), this protein is UPF0060 membrane protein Mflv_3127.